Consider the following 421-residue polypeptide: Enolase (421 aa).

Glutamate 207 acts as the Proton donor in catalysis. Aspartate 244, glutamate 285, and aspartate 312 together coordinate Mg(2+). The active-site Proton acceptor is the lysine 337. Positions 337, 366, 367, and 388 each coordinate (2R)-2-phosphoglycerate.

It belongs to the enolase family. Requires Mg(2+) as cofactor.

Its subcellular location is the cytoplasm. It is found in the secreted. It localises to the cell surface. It catalyses the reaction (2R)-2-phosphoglycerate = phosphoenolpyruvate + H2O. Its pathway is carbohydrate degradation; glycolysis; pyruvate from D-glyceraldehyde 3-phosphate: step 4/5. Functionally, catalyzes the reversible conversion of 2-phosphoglycerate (2-PG) into phosphoenolpyruvate (PEP). It is essential for the degradation of carbohydrates via glycolysis. The sequence is that of Enolase from Ehrlichia ruminantium (strain Gardel).